Reading from the N-terminus, the 369-residue chain is Histidinol-phosphate aminotransferase 3 (369 aa).

Lys220 bears the N6-(pyridoxal phosphate)lysine mark.

This sequence belongs to the class-II pyridoxal-phosphate-dependent aminotransferase family. Histidinol-phosphate aminotransferase subfamily. Homodimer. Pyridoxal 5'-phosphate serves as cofactor.

It catalyses the reaction L-histidinol phosphate + 2-oxoglutarate = 3-(imidazol-4-yl)-2-oxopropyl phosphate + L-glutamate. It functions in the pathway amino-acid biosynthesis; L-histidine biosynthesis; L-histidine from 5-phospho-alpha-D-ribose 1-diphosphate: step 7/9. This chain is Histidinol-phosphate aminotransferase 3 (hisC3), found in Mesorhizobium japonicum (strain LMG 29417 / CECT 9101 / MAFF 303099) (Mesorhizobium loti (strain MAFF 303099)).